A 207-amino-acid polypeptide reads, in one-letter code: Large ribosomal subunit protein uL4 (207 aa).

A disordered region spans residues 48 to 85 (THKVKNRSEVRGGGRKPWRQKGTGRARQGSIRSPQWRG). Residues 60–71 (GGRKPWRQKGTG) show a composition bias toward basic residues.

This sequence belongs to the universal ribosomal protein uL4 family. As to quaternary structure, part of the 50S ribosomal subunit.

Its function is as follows. One of the primary rRNA binding proteins, this protein initially binds near the 5'-end of the 23S rRNA. It is important during the early stages of 50S assembly. It makes multiple contacts with different domains of the 23S rRNA in the assembled 50S subunit and ribosome. Functionally, forms part of the polypeptide exit tunnel. In Bacillus subtilis (strain 168), this protein is Large ribosomal subunit protein uL4.